Reading from the N-terminus, the 801-residue chain is Sucrose synthase isoform 2 (801 aa).

The GT-B glycosyltransferase stretch occupies residues Met-271–Thr-748.

It belongs to the glycosyltransferase 1 family. Plant sucrose synthase subfamily. Homotetramer. Exclusively expressed in flowers.

It catalyses the reaction an NDP-alpha-D-glucose + D-fructose = a ribonucleoside 5'-diphosphate + sucrose + H(+). Its function is as follows. Sucrose-cleaving enzyme that provides UDP-glucose and fructose for various metabolic pathways. In Daucus carota (Wild carrot), this protein is Sucrose synthase isoform 2.